The sequence spans 61 residues: Large ribosomal subunit protein uL30 (61 aa).

The protein belongs to the universal ribosomal protein uL30 family. In terms of assembly, part of the 50S ribosomal subunit.

This is Large ribosomal subunit protein uL30 from Corynebacterium urealyticum (strain ATCC 43042 / DSM 7109).